The following is a 299-amino-acid chain: S-formylglutathione hydrolase (299 aa).

2 residues coordinate Cu cation: Met-1 and His-140. Active-site charge relay system residues include Ser-161, Asp-241, and His-276.

Belongs to the esterase D family. Monomer.

It localises to the cytoplasm. It carries out the reaction S-formylglutathione + H2O = formate + glutathione + H(+). Functionally, serine hydrolase involved in the detoxification of formaldehyde. The protein is S-formylglutathione hydrolase of Saccharomyces cerevisiae (strain ATCC 204508 / S288c) (Baker's yeast).